Consider the following 255-residue polypeptide: Type III pantothenate kinase (255 aa).

Position 6 to 13 (6 to 13 (DVGNTNIV)) interacts with ATP. Substrate is bound by residues Tyr-100 and 107–110 (GADR). Asp-109 acts as the Proton acceptor in catalysis. Asp-129 lines the K(+) pocket. Thr-132 is an ATP binding site. Thr-184 is a substrate binding site.

The protein belongs to the type III pantothenate kinase family. As to quaternary structure, homodimer. NH4(+) is required as a cofactor. It depends on K(+) as a cofactor.

The protein localises to the cytoplasm. It catalyses the reaction (R)-pantothenate + ATP = (R)-4'-phosphopantothenate + ADP + H(+). Its pathway is cofactor biosynthesis; coenzyme A biosynthesis; CoA from (R)-pantothenate: step 1/5. In terms of biological role, catalyzes the phosphorylation of pantothenate (Pan), the first step in CoA biosynthesis. The protein is Type III pantothenate kinase of Geobacter sulfurreducens (strain ATCC 51573 / DSM 12127 / PCA).